The primary structure comprises 220 residues: Glycerol-3-phosphate acyltransferase (220 aa).

The next 6 helical transmembrane spans lie at 11–31 (INVI…GYAL), 70–90 (LLVL…SKLF), 96–116 (LQWM…FLNF), 127–147 (GSVV…WFFV), 153–173 (ISSL…FFVP), and 193–213 (MVLI…NLLA).

It belongs to the PlsY family. In terms of assembly, probably interacts with PlsX.

It is found in the cell inner membrane. It catalyses the reaction an acyl phosphate + sn-glycerol 3-phosphate = a 1-acyl-sn-glycero-3-phosphate + phosphate. It functions in the pathway lipid metabolism; phospholipid metabolism. Catalyzes the transfer of an acyl group from acyl-phosphate (acyl-PO(4)) to glycerol-3-phosphate (G3P) to form lysophosphatidic acid (LPA). This enzyme utilizes acyl-phosphate as fatty acyl donor, but not acyl-CoA or acyl-ACP. The polypeptide is Glycerol-3-phosphate acyltransferase (Helicobacter pylori (strain HPAG1)).